We begin with the raw amino-acid sequence, 144 residues long: 3-hydroxyacyl-[acyl-carrier-protein] dehydratase FabZ (144 aa).

The active site involves His47.

This sequence belongs to the thioester dehydratase family. FabZ subfamily.

The protein resides in the cytoplasm. The enzyme catalyses a (3R)-hydroxyacyl-[ACP] = a (2E)-enoyl-[ACP] + H2O. Its function is as follows. Involved in unsaturated fatty acids biosynthesis. Catalyzes the dehydration of short chain beta-hydroxyacyl-ACPs and long chain saturated and unsaturated beta-hydroxyacyl-ACPs. This chain is 3-hydroxyacyl-[acyl-carrier-protein] dehydratase FabZ, found in Alcanivorax borkumensis (strain ATCC 700651 / DSM 11573 / NCIMB 13689 / SK2).